We begin with the raw amino-acid sequence, 101 residues long: MSAEDLEKYETEMELSLYREYKDIVGQFSYVVETERRFYLANSVEMVPRNTDGEVYFELRLADAWVWDMYRPARFVKQVRVVTFKDVNIEEVEKPELRLPE.

This is an uncharacterized protein from Mycobacterium bovis (strain ATCC BAA-935 / AF2122/97).